The chain runs to 491 residues: Glutamate--tRNA ligase (491 aa).

The 'HIGH' region motif lies at 9–19; that stretch reads PSPTGTPHVGL. A 'KMSKS' region motif is present at residues 253-257; it reads KLSKR. K256 is an ATP binding site.

Belongs to the class-I aminoacyl-tRNA synthetase family. Glutamate--tRNA ligase type 1 subfamily. In terms of assembly, monomer.

The protein resides in the cytoplasm. The catalysed reaction is tRNA(Glu) + L-glutamate + ATP = L-glutamyl-tRNA(Glu) + AMP + diphosphate. Catalyzes the attachment of glutamate to tRNA(Glu) in a two-step reaction: glutamate is first activated by ATP to form Glu-AMP and then transferred to the acceptor end of tRNA(Glu). The polypeptide is Glutamate--tRNA ligase (Mycolicibacterium gilvum (strain PYR-GCK) (Mycobacterium gilvum (strain PYR-GCK))).